Consider the following 309-residue polypeptide: Methionine synthase (309 aa).

Zn(2+)-binding residues include His201, Cys203, Glu224, and Cys285.

It belongs to the archaeal MetE family. It depends on Zn(2+) as a cofactor.

The protein operates within amino-acid biosynthesis; L-methionine biosynthesis via de novo pathway. Is activated by phosphates. In terms of biological role, catalyzes the transfer of a methyl group to L-homocysteine resulting in methionine formation. Can use methylcobalamin and methylcobinamide as methyl donors, but methylcobalamin is not considered to be the physiological substrate. It was proposed that, in vivo, a so-far-unidentified enzyme catalyzes methyltransfer from 5-methyltetrahydromethanopterin (5-CH3-H4MPT) to a corrinoid protein, and that the MetE gene product catalyzes the further transfer to L-homocysteine. Is not active with L-cysteine, coenzyme M, coenzyme B, glutathione or dithiothreitol as substrate. This chain is Methionine synthase, found in Methanothermobacter marburgensis (strain ATCC BAA-927 / DSM 2133 / JCM 14651 / NBRC 100331 / OCM 82 / Marburg) (Methanobacterium thermoautotrophicum).